The primary structure comprises 183 residues: Ribulose bisphosphate carboxylase small subunit, chloroplastic 3 (183 aa).

Residues 1 to 57 (MASSLMSNAATTMAAATTTAQANMVAPFNGLKSVSAFPVTRKNNDITSVASNGGRVQ) constitute a chloroplast transit peptide.

Belongs to the RuBisCO small chain family. As to quaternary structure, heterohexadecamer of 8 large and 8 small subunits.

Its subcellular location is the plastid. It is found in the chloroplast. Its function is as follows. RuBisCO catalyzes two reactions: the carboxylation of D-ribulose 1,5-bisphosphate, the primary event in carbon dioxide fixation, as well as the oxidative fragmentation of the pentose substrate. Both reactions occur simultaneously and in competition at the same active site. Although the small subunit is not catalytic it is essential for maximal activity. This is Ribulose bisphosphate carboxylase small subunit, chloroplastic 3 from Mesembryanthemum crystallinum (Common ice plant).